Consider the following 216-residue polypeptide: Adenylate kinase (216 aa).

Residue 10–15 (GAGKGT) participates in ATP binding. Residues 30 to 59 (STGDMFRAAMKAETEMGLQAKSFIDKGALV) form an NMP region. Residues threonine 31, arginine 36, 57-59 (ALV), 85-88 (GFPR), and glutamine 92 each bind AMP. Positions 126 to 163 (GRRICKECGATYHLEFNPPAKADVCDKCGGELYQRSDD) are LID. Position 127 (arginine 127) interacts with ATP. Zn(2+) is bound by residues cysteine 130 and cysteine 133. ATP is bound at residue 136-137 (TY). Cysteine 150 and cysteine 153 together coordinate Zn(2+). Arginine 160 and arginine 171 together coordinate AMP. Glutamine 199 is a binding site for ATP.

This sequence belongs to the adenylate kinase family. Monomer.

Its subcellular location is the cytoplasm. It catalyses the reaction AMP + ATP = 2 ADP. It functions in the pathway purine metabolism; AMP biosynthesis via salvage pathway; AMP from ADP: step 1/1. Functionally, catalyzes the reversible transfer of the terminal phosphate group between ATP and AMP. Plays an important role in cellular energy homeostasis and in adenine nucleotide metabolism. The chain is Adenylate kinase from Bacillus cereus (strain ATCC 10987 / NRS 248).